A 775-amino-acid polypeptide reads, in one-letter code: 1,4-alpha-glucan branching enzyme GlgB (775 aa).

The tract at residues 1 to 39 is disordered; sequence MTSVHDFATATRPATPSAAAQEPAPALPPGLDRNTLDAL. Residues 8-24 show a composition bias toward low complexity; the sequence is ATATRPATPSAAAQEPA. Asp-454 serves as the catalytic Nucleophile. Glu-507 (proton donor) is an active-site residue.

The protein belongs to the glycosyl hydrolase 13 family. GlgB subfamily. As to quaternary structure, monomer.

The enzyme catalyses Transfers a segment of a (1-&gt;4)-alpha-D-glucan chain to a primary hydroxy group in a similar glucan chain.. It functions in the pathway glycan biosynthesis; glycogen biosynthesis. Functionally, catalyzes the formation of the alpha-1,6-glucosidic linkages in glycogen by scission of a 1,4-alpha-linked oligosaccharide from growing alpha-1,4-glucan chains and the subsequent attachment of the oligosaccharide to the alpha-1,6 position. The sequence is that of 1,4-alpha-glucan branching enzyme GlgB from Ralstonia nicotianae (strain ATCC BAA-1114 / GMI1000) (Ralstonia solanacearum).